Reading from the N-terminus, the 290-residue chain is Diaminopimelate epimerase (290 aa).

The substrate site is built by asparagine 14 and asparagine 67. Cysteine 76 functions as the Proton donor in the catalytic mechanism. Substrate is bound by residues 77-78 (GN), asparagine 166, asparagine 199, and 217-218 (ER). Cysteine 226 acts as the Proton acceptor in catalysis. Position 227-228 (227-228 (GT)) interacts with substrate.

This sequence belongs to the diaminopimelate epimerase family. In terms of assembly, homodimer.

It localises to the cytoplasm. The enzyme catalyses (2S,6S)-2,6-diaminopimelate = meso-2,6-diaminopimelate. It functions in the pathway amino-acid biosynthesis; L-lysine biosynthesis via DAP pathway; DL-2,6-diaminopimelate from LL-2,6-diaminopimelate: step 1/1. Its function is as follows. Catalyzes the stereoinversion of LL-2,6-diaminopimelate (L,L-DAP) to meso-diaminopimelate (meso-DAP), a precursor of L-lysine and an essential component of the bacterial peptidoglycan. The protein is Diaminopimelate epimerase of Geobacillus thermodenitrificans (strain NG80-2).